The sequence spans 4293 residues: Polycystin-1 (4293 aa).

The first 23 residues, 1 to 23 (MPLGAPALLALALGLGLWLGALA), serve as a signal peptide directing secretion. One can recognise an LRRNT domain in the interval 24-67 (GDPGRGCGPCPLPCFCGPAPDAACRVNCSGRWLQTLGPSLRIPA). Topologically, residues 24–3066 (GDPGRGCGPC…IFPEPSASIN (3043 aa)) are extracellular. Residues Asn-50 and Asn-89 are each glycosylated (N-linked (GlcNAc...) asparagine). LRR repeat units lie at residues 68–91 (DATA…VNLS) and 92–113 (ALVE…VFAN). 2 N-linked (GlcNAc...) asparagine glycosylation sites follow: Asn-116 and Asn-121. The region spanning 125-178 (NPFECNCGLAWLPRWAKEHQVHVVQSEATTCRGPIPLAGQPLLSIPLLDNACGE) is the LRRCT domain. A WSC domain is found at 177–271 (GEEYVACLPD…PTLLQHTFPA (95 aa)). Residues Asn-187 and Asn-239 are each glycosylated (N-linked (GlcNAc...) asparagine). The PKD 1 domain maps to 272 to 359 (SPGATLVGPH…VQVEATPTVL (88 aa)). Asn-370 carries an N-linked (GlcNAc...) asparagine glycan. Positions 415–530 (GNGHCYRLVA…CSAPHSYVCE (116 aa)) constitute a C-type lectin domain. Cystine bridges form between Cys-436-Cys-529 and Cys-507-Cys-521. A disordered region spans residues 613–632 (GGAAAVPEGSSEPDNRTEPA). Asn-627 is a glycosylation site (N-linked (GlcNAc...) asparagine). Residues 633–666 (PKCVPEELWCPGANVCIPFDASCNSHVCINGSVS) form the LDL-receptor class A; atypical domain. Intrachain disulfides connect Cys-635/Cys-648 and Cys-642/Cys-660. N-linked (GlcNAc...) asparagine glycosylation is found at Asn-662, Asn-740, Asn-804, Asn-835, Asn-848, Asn-859, Asn-884, Asn-915, Asn-998, Asn-1004, Asn-1028, Asn-1084, Asn-1096, Asn-1107, Asn-1172, Asn-1188, Asn-1234, Asn-1263, Asn-1330, Asn-1342, Asn-1376, Asn-1444, Asn-1449, Asn-1468, Asn-1535, Asn-1548, Asn-1557, Asn-1643, Asn-1657, Asn-1706, Asn-1730, Asn-1788, Asn-1831, Asn-1863, and Asn-1876. 15 consecutive PKD domains span residues 849–922 (ATAT…RVTA), 929–1014 (LRAV…NKMH), 1017–1123 (WVSA…LPNV), 1121–1209 (PNVA…LHGL), 1207–1292 (HGLT…EVLH), 1288–1377 (LEVL…IRNI), 1376–1463 (NITL…VLVT), 1462–1545 (VTGI…VRGL), 1544–1629 (GLTI…IEGL), 1630–1718 (QVAG…VESL), 1716–1802 (ESLI…VGGL), 1804–1886 (IRTS…IVNL), 1885–1970 (NLML…VVGL), 1972–2053 (VPNC…MVEV), and 2056–2144 (IIQY…ACRE). Residues Asn-1987, Asn-2046, Asn-2070, Asn-2121, Asn-2244, Asn-2349, Asn-2391, Asn-2408, Asn-2414, Asn-2563, Asn-2640, Asn-2713, Asn-2749, Asn-2813, Asn-2836, Asn-2873, Asn-2948, and Asn-2986 are each glycosylated (N-linked (GlcNAc...) asparagine). Residues 2142–2828 (CREPEVEVAL…QLIFLVDSNP (687 aa)) enclose the REJ domain. Positions 2857–3055 (PIEQLAAERA…SLFVPPSHVQ (199 aa)) constitute a GAIN-B domain. Cysteines 3007 and 3035 form a disulfide. Positions 3007-3055 (CQYFSEEMMMWRTEGIVPLEETSPSQAVCLTRHLTAFGASLFVPPSHVQ) are GPS. A helical membrane pass occupies residues 3067–3087 (YIVLLTCVICLVTYVVMAMIL). The Cytoplasmic segment spans residues 3088-3269 (RKLDQLDVSR…DRPPRSRFTR (182 aa)). The PLAT domain maps to 3110–3225 (FKYEILVKTG…EANGGLVEKE (116 aa)). A helical membrane pass occupies residues 3270–3290 (VQRVTCCVLLLCLFLAANAVW). The Extracellular portion of the chain corresponds to 3291-3315 (YGVVRDTTYSMGPVSSLISPGVDTV). Residues 3316 to 3336 (AIGLVSSVVVYPVYLAVLFLF) form a helical membrane-spanning segment. The Cytoplasmic portion of the chain corresponds to 3337-3549 (RMSRSKVSGD…LPAWCAPLAH (213 aa)). The helical transmembrane segment at 3550-3570 (GLSLLLVAVAVAVSGWIGASF) threads the bilayer. Residues 3571–3572 (PP) lie on the Extracellular side of the membrane. The helical transmembrane segment at 3573-3593 (SVSVMWLLSSSSSFLASFLGW) threads the bilayer. At 3594 to 3655 (EPLKVLLEAL…LAKEEARKVK (62 aa)) the chain is on the cytoplasmic side. A helical transmembrane segment spans residues 3656-3676 (RLHDMLKRLLVYMLFLLVTLL). Over 3677–3891 (ANYGDASCHG…RLSTGLSLPL (215 aa)) the chain is Extracellular. Residues Asn-3728 and Asn-3780 are each glycosylated (N-linked (GlcNAc...) asparagine). A helical membrane pass occupies residues 3892–3912 (LTSVCLLLFALYFSMAEVQTW). The Cytoplasmic portion of the chain corresponds to 3913–3925 (RKDGCACTARPDT). Residues 3926-3946 (WARCLLVILTAATGLVRLAQL) form a helical membrane-spanning segment. At 3947-3974 (GIADRQWTHFVQDHPRHFTSFDQVAQLG) the chain is on the extracellular side. The helical transmembrane segment at 3975-3995 (SVARGLAASLLFLLLVKAAQQ) threads the bilayer. The Cytoplasmic portion of the chain corresponds to 3996–4017 (LRFVRQWSVFGKTLCRALPELM). A helical transmembrane segment spans residues 4018–4038 (GATLGLVLLGVAYAQMAILLI). Topologically, residues 4039–4080 (SSGADTLYNMARAFLVLCPGARVPTLCPSESWYLSPLLCVGL) are extracellular. Residues 4081–4100 (WALRVWGALRLGAILLRWRY) form a helical membrane-spanning segment. Over 4101–4293 (HALRGELYRP…PNNKVHPSST (193 aa)) the chain is Cytoplasmic. Disordered stretches follow at residues 4150-4197 (PLPS…STLK) and 4235-4293 (SLQG…PSST). Low complexity predominate over residues 4153–4172 (SRSSRGSKSSPVVLPPSSGS). Ser-4156 is subject to Phosphoserine; by PRKX; in vitro. Residues 4173–4195 (EASHPSTSSSQPDGPSASLSRST) show a composition bias toward polar residues. A coiled-coil region spans residues 4210–4241 (ESLLVQFDRLNQATEDVYQLEQQLQSLQGHGH). The segment covering 4238 to 4256 (GHGHNGPPSSPSPGCFPGS) has biased composition (low complexity). Over residues 4265 to 4276 (SRASQGLDQTVG) the composition is skewed to polar residues.

This sequence belongs to the polycystin family. Component of the heterotetrameric polycystin channel complex with PKD2; the tetramer contains one PKD1 chain and three PKD2 chains. Interacts with PKD2; the interaction is required for ciliary localization. Interacts with PKD2L1. Interacts with PRKX; involved in differentiation and controlled morphogenesis of the kidney. Interacts (via extracellular domain) with WNT3A, WNT4 and WNT9B. Interacts with WNT5A, DVL1 and DVL2. Interacts with NPHP1 (via SH3 domain). Interacts with BBS1, BBS4, BBS5 and TTC8. Interacts with RGS7. Interacts (via C-terminal domain) with RABEP1; the interaction connects PKD1:PKD2 to GGA1 and ARL3 that mediate the ciliary targeting. Interacts (via the PKD repeats in the N-terminal extracellular region) with EPCIP; the interaction is not dependent on N-glycosylation of either protein. Post-translationally, N-glycosylated. After synthesis, undergoes autoproteolytic cleavage between Leu-3040 and Thr-3041 in the GPS region of the GAIN-B domain. Cleavage at the GPS region occurs through a cis-autoproteolytic mechanism involving an ester-intermediate via N-O acyl rearrangement. This process takes place in the early secretory pathway, depends on initial N-glycosylation, and requires the REJ domain. PKD1 is ubiquitously and incompletely cleaved in wild-type mice, so that uncleaved and cleaved PKD1 molecules coexist. The differential patterns of cleavage during embryonic development, as well as in adult mice, suggest different functions of uncleaved and cleaved molecules.

The protein localises to the cell membrane. It is found in the cell projection. Its subcellular location is the cilium. The protein resides in the endoplasmic reticulum. It localises to the golgi apparatus. The protein localises to the vesicle. It is found in the secreted. Its subcellular location is the extracellular exosome. Functionally, component of a heteromeric calcium-permeable ion channel formed by PKD1 and PKD2 that is activated by interaction between PKD1 and a Wnt family member, such as WNT3A and WNT9B. Both PKD1 and PKD2 are required for channel activity. Involved in renal tubulogenesis. Involved in fluid-flow mechanosensation by the primary cilium in renal epithelium. Acts as a regulator of cilium length, together with PKD2. The dynamic control of cilium length is essential in the regulation of mechanotransductive signaling. The cilium length response creates a negative feedback loop whereby fluid shear-mediated deflection of the primary cilium, which decreases intracellular cAMP, leads to cilium shortening and thus decreases flow-induced signaling. May be an ion-channel regulator. Involved in adhesive protein-protein and protein-carbohydrate interactions. Likely to be involved with polycystin-1-interacting protein 1 in the detection, sequestration and exocytosis of senescent mitochondria. This chain is Polycystin-1, found in Mus musculus (Mouse).